Consider the following 447-residue polypeptide: GTPase Der (447 aa).

EngA-type G domains follow at residues 3-167 (PVIA…FAER) and 181-354 (TRIA…AAAM). GTP contacts are provided by residues 9–16 (GRPNVGKS), 56–60 (DTGGF), 119–122 (NKAE), 187–194 (GRPNVGKS), 234–238 (DTAGL), and 299–302 (NKWD). One can recognise a KH-like domain in the interval 355-439 (VKLPTPKLTR…PLRIEFRTNK (85 aa)).

The protein belongs to the TRAFAC class TrmE-Era-EngA-EngB-Septin-like GTPase superfamily. EngA (Der) GTPase family. In terms of assembly, associates with the 50S ribosomal subunit.

Its function is as follows. GTPase that plays an essential role in the late steps of ribosome biogenesis. The protein is GTPase Der of Ralstonia nicotianae (strain ATCC BAA-1114 / GMI1000) (Ralstonia solanacearum).